Reading from the N-terminus, the 158-residue chain is Ribosome maturation factor RimP (158 aa).

Belongs to the RimP family.

Its subcellular location is the cytoplasm. Functionally, required for maturation of 30S ribosomal subunits. In Lactobacillus gasseri (strain ATCC 33323 / DSM 20243 / BCRC 14619 / CIP 102991 / JCM 1131 / KCTC 3163 / NCIMB 11718 / NCTC 13722 / AM63), this protein is Ribosome maturation factor RimP.